Reading from the N-terminus, the 262-residue chain is Small ribosomal subunit protein uS2 (262 aa).

The protein belongs to the universal ribosomal protein uS2 family.

The polypeptide is Small ribosomal subunit protein uS2 (Azobacteroides pseudotrichonymphae genomovar. CFP2).